Here is a 216-residue protein sequence, read N- to C-terminus: MMNKIHKDNRGVLIVISGPSGAGKGTICKALLEKHDDIFISISATTRNPRVGEVDGVNYHFLTKEEFKQRIAEDDFLEHAEVYGNYYGTPKSSVEKMLDEGKNVILEIDIQGALKVKEKATDGVFIFILPPSMEELKQRIIKRGSETPESLMTRFKSAYKEINYVSKYNYAVVNDNVEDAVKKIEAILLAEKCRVDRLKENLLESKEDEMHEQLYD.

Positions glycine 11–leucine 189 constitute a Guanylate kinase-like domain. Glycine 18–glycine 25 serves as a coordination point for ATP.

It belongs to the guanylate kinase family.

Its subcellular location is the cytoplasm. The catalysed reaction is GMP + ATP = GDP + ADP. Essential for recycling GMP and indirectly, cGMP. The sequence is that of Guanylate kinase (gmk) from Clostridium perfringens (strain 13 / Type A).